Consider the following 344-residue polypeptide: Phosphoribosylformylglycinamidine cyclo-ligase (344 aa).

This sequence belongs to the AIR synthase family.

The protein resides in the cytoplasm. The catalysed reaction is 2-formamido-N(1)-(5-O-phospho-beta-D-ribosyl)acetamidine + ATP = 5-amino-1-(5-phospho-beta-D-ribosyl)imidazole + ADP + phosphate + H(+). Its pathway is purine metabolism; IMP biosynthesis via de novo pathway; 5-amino-1-(5-phospho-D-ribosyl)imidazole from N(2)-formyl-N(1)-(5-phospho-D-ribosyl)glycinamide: step 2/2. This Laribacter hongkongensis (strain HLHK9) protein is Phosphoribosylformylglycinamidine cyclo-ligase.